The following is a 603-amino-acid chain: Serine protease 56 (603 aa).

Positions 1–19 are cleaved as a signal peptide; the sequence is MLLAVLLLLPLPSSWFAHG. Residues 64–96 are disordered; that stretch reads SHECRGSGRPRPQALLQDPPEPGPCGERRPSTA. N-linked (GlcNAc...) asparagine glycosylation is present at asparagine 97. The region spanning 105 to 337 is the Peptidase S1 domain; that stretch reads IVGGSAAPPG…FKDWLQEQMS (233 aa). A disulfide bond links cysteine 130 and cysteine 146. Active-site charge relay system residues include histidine 145 and aspartate 191. Disulfide bonds link cysteine 225–cysteine 292, cysteine 256–cysteine 271, and cysteine 282–cysteine 313. Serine 286 functions as the Charge relay system in the catalytic mechanism. Disordered regions lie at residues 442–474 and 573–603; these read PARE…NGCP and EGPW…ARQP.

This sequence belongs to the peptidase S1 family. As to expression, expressed neural retina, cornea, sclera and optic nerve.

Serine protease required during eye development. This chain is Serine protease 56 (PRSS56), found in Homo sapiens (Human).